The sequence spans 464 residues: Cysteine--tRNA ligase (464 aa).

Cysteine 27 contacts Zn(2+). A 'HIGH' region motif is present at residues 29 to 39; that stretch reads PTVYDDAHLGH. Cysteine 203, histidine 234, and glutamate 238 together coordinate Zn(2+). Residues 266 to 270 carry the 'KMSKS' region motif; sequence KMSKS. Lysine 269 lines the ATP pocket.

It belongs to the class-I aminoacyl-tRNA synthetase family. As to quaternary structure, monomer. Requires Zn(2+) as cofactor.

Its subcellular location is the cytoplasm. The enzyme catalyses tRNA(Cys) + L-cysteine + ATP = L-cysteinyl-tRNA(Cys) + AMP + diphosphate. The polypeptide is Cysteine--tRNA ligase (Campylobacter concisus (strain 13826)).